The primary structure comprises 171 residues: MVVYDLLVSLSKESIDVLRFVEANLAAFNQQYIFFNIQRKNSITTPLLITPQQEKISQIVEFLMDEYNKNNRRPSGPPREQPMHPLLPYQQSSDEQPMMPYQQPPGNDDQPYEQIYHKKHASQQVNTELNDYYQHILALGDEDKGMDSMLKLPEKAKRGSDDEDDMFSIKN.

Disordered stretches follow at residues 68–112 (NKNN…DQPY) and 152–171 (LPEKAKRGSDDEDDMFSIKN). Acidic residues predominate over residues 161-171 (DDEDDMFSIKN).

It belongs to the asfivirus H171R family.

Its subcellular location is the virion. This is an uncharacterized protein from African swine fever virus (strain Badajoz 1971 Vero-adapted) (Ba71V).